Reading from the N-terminus, the 108-residue chain is uncharacterized protein (108 aa).

A helical transmembrane segment spans residues 59-81 (NIVIILWKIMVVIISSIIHRTYI).

It is found in the membrane. This is an uncharacterized protein from Rickettsia conorii (strain ATCC VR-613 / Malish 7).